The primary structure comprises 104 residues: Putative zinc finger protein ORF104b (104 aa).

The C2H2-type zinc finger occupies 62–85 (YECKYCHTRYLSHTGIVYHLEREH).

The protein is Putative zinc finger protein ORF104b of Acidianus sp. F28 (AFV-2).